Consider the following 337-residue polypeptide: tRNA N6-adenosine threonylcarbamoyltransferase (337 aa).

Fe cation is bound by residues H111 and H115. Substrate-binding positions include 134–138, D167, G180, and N272; that span reads LVSGG. Residue D300 participates in Fe cation binding.

It belongs to the KAE1 / TsaD family. Fe(2+) serves as cofactor.

It is found in the cytoplasm. The enzyme catalyses L-threonylcarbamoyladenylate + adenosine(37) in tRNA = N(6)-L-threonylcarbamoyladenosine(37) in tRNA + AMP + H(+). In terms of biological role, required for the formation of a threonylcarbamoyl group on adenosine at position 37 (t(6)A37) in tRNAs that read codons beginning with adenine. Is involved in the transfer of the threonylcarbamoyl moiety of threonylcarbamoyl-AMP (TC-AMP) to the N6 group of A37, together with TsaE and TsaB. TsaD likely plays a direct catalytic role in this reaction. The protein is tRNA N6-adenosine threonylcarbamoyltransferase of Escherichia coli O139:H28 (strain E24377A / ETEC).